Reading from the N-terminus, the 701-residue chain is Elongation factor G (701 aa).

The region spanning 11 to 287 (TKVRNIGIMA…AVIDYLPSPL (277 aa)) is the tr-type G domain. GTP is bound by residues 20 to 27 (AHIDAGKT), 84 to 88 (DTPGH), and 138 to 141 (NKMD).

It belongs to the TRAFAC class translation factor GTPase superfamily. Classic translation factor GTPase family. EF-G/EF-2 subfamily.

The protein localises to the cytoplasm. In terms of biological role, catalyzes the GTP-dependent ribosomal translocation step during translation elongation. During this step, the ribosome changes from the pre-translocational (PRE) to the post-translocational (POST) state as the newly formed A-site-bound peptidyl-tRNA and P-site-bound deacylated tRNA move to the P and E sites, respectively. Catalyzes the coordinated movement of the two tRNA molecules, the mRNA and conformational changes in the ribosome. This is Elongation factor G from Mycobacterium avium (strain 104).